The primary structure comprises 359 residues: Membrane-bound lytic murein transglycosylase C (359 aa).

The first 16 residues, 1–16 (MKKVLALALIAPLLIS), serve as a signal peptide directing secretion. Cys17 carries N-palmitoyl cysteine lipidation. The S-diacylglycerol cysteine moiety is linked to residue Cys17.

It belongs to the transglycosylase Slt family.

The protein resides in the cell outer membrane. It catalyses the reaction Exolytic cleavage of the (1-&gt;4)-beta-glycosidic linkage between N-acetylmuramic acid (MurNAc) and N-acetylglucosamine (GlcNAc) residues in peptidoglycan, from either the reducing or the non-reducing ends of the peptidoglycan chains, with concomitant formation of a 1,6-anhydrobond in the MurNAc residue.. Functionally, murein-degrading enzyme. May play a role in recycling of muropeptides during cell elongation and/or cell division. The sequence is that of Membrane-bound lytic murein transglycosylase C from Edwardsiella ictaluri (strain 93-146).